A 378-amino-acid polypeptide reads, in one-letter code: Cobalt-precorrin-5B C(1)-methyltransferase (378 aa).

It belongs to the CbiD family.

It carries out the reaction Co-precorrin-5B + S-adenosyl-L-methionine = Co-precorrin-6A + S-adenosyl-L-homocysteine. Its pathway is cofactor biosynthesis; adenosylcobalamin biosynthesis; cob(II)yrinate a,c-diamide from sirohydrochlorin (anaerobic route): step 6/10. Functionally, catalyzes the methylation of C-1 in cobalt-precorrin-5B to form cobalt-precorrin-6A. The polypeptide is Cobalt-precorrin-5B C(1)-methyltransferase (Synechocystis sp. (strain ATCC 27184 / PCC 6803 / Kazusa)).